The following is a 213-amino-acid chain: Riboflavin/roseoflavin transporter RibM (213 aa).

The next 5 helical transmembrane spans lie at 15–35 (HIIWSDMVGNILGLITLALGF), 38–58 (SLWTWPVQFLSGLVLFGAFYG), 107–129 (IAAAAVGTVAVALLFKAYPSLSW), 136–158 (YIFVGTIVAMYAQARGMVEFWFA), and 171–193 (FANGYAFSGFVYVIYGALVLWGM).

This sequence belongs to the nicotinamide ribonucleoside (NR) uptake permease (TC 4.B.1) family.

The protein resides in the cell membrane. Functionally, transports riboflavin and roseoflavin. Can also transport FMN and FAD. May confer roseoflavin resistance to S.davawensis, which naturally produces this antibiotic during stationary growth phase. The chain is Riboflavin/roseoflavin transporter RibM from Streptomyces davaonensis (strain DSM 101723 / JCM 4913 / KCC S-0913 / 768).